Consider the following 1244-residue polypeptide: Ras-specific guanine nucleotide-releasing factor 2 (1244 aa).

In terms of domain architecture, PH 1 spans 22–129 (EGTKRGYLSK…WVEAIQQASY (108 aa)). A coiled-coil region spans residues 147-189 (VQIVETEKVAANQLRTQLEDQDTEIERLKAEIIALNKTKERMR). In terms of domain architecture, IQ spans 201-230 (DIKKIKKVQSFMRGWLCRRKWKIIVQDYIC). Positions 239–425 (KRNQIVFNMV…EELSRVMHDE (187 aa)) constitute a DH domain. The PH 2 domain maps to 466 to 584 (PSVERGKLSK…WTSDISQCID (119 aa)). The 115-residue stretch at 631 to 745 (KVPQIRYASV…PVRTRKLSLN (115 aa)) folds into the N-terminal Ras-GEF domain. Disordered stretches follow at residues 704–743 (NRSGDHVNDKSPRLCRKFSSPPPLSISSRTSSPVRTRKLS), 759–814 (TTSS…NAEV), and 843–879 (PESPQASEPGEISPCRSPSTPRHLRYRQSGVQTAENS). Residues 706–715 (SGDHVNDKSP) show a composition bias toward basic and acidic residues. A compositionally biased stretch (polar residues) spans 728-743 (SISSRTSSPVRTRKLS). Low complexity-rich tracts occupy residues 759–774 (TTSSSAASSPTSANPT) and 781–806 (NNNNNSKPPLDLSRGQSPSSPEQSPG). A Ras-GEF domain is found at 1009-1241 (SAMEIAEQIT…YDLSLKIEPR (233 aa)).

The protein resides in the cytoplasm. It is found in the cell membrane. Its subcellular location is the endoplasmic reticulum membrane. In terms of biological role, functions as a calcium-regulated nucleotide exchange factor activating both Ras and rac1 through the exchange of bound GDP for GTP. May function in synaptic plasticity. This chain is Ras-specific guanine nucleotide-releasing factor 2 (rasgrf2), found in Danio rerio (Zebrafish).